A 268-amino-acid chain; its full sequence is Leucyl/phenylalanyl-tRNA--protein transferase (268 aa).

Belongs to the L/F-transferase family.

It is found in the cytoplasm. The enzyme catalyses N-terminal L-lysyl-[protein] + L-leucyl-tRNA(Leu) = N-terminal L-leucyl-L-lysyl-[protein] + tRNA(Leu) + H(+). The catalysed reaction is N-terminal L-arginyl-[protein] + L-leucyl-tRNA(Leu) = N-terminal L-leucyl-L-arginyl-[protein] + tRNA(Leu) + H(+). It carries out the reaction L-phenylalanyl-tRNA(Phe) + an N-terminal L-alpha-aminoacyl-[protein] = an N-terminal L-phenylalanyl-L-alpha-aminoacyl-[protein] + tRNA(Phe). Its function is as follows. Functions in the N-end rule pathway of protein degradation where it conjugates Leu, Phe and, less efficiently, Met from aminoacyl-tRNAs to the N-termini of proteins containing an N-terminal arginine or lysine. In Psychrobacter arcticus (strain DSM 17307 / VKM B-2377 / 273-4), this protein is Leucyl/phenylalanyl-tRNA--protein transferase.